A 309-amino-acid chain; its full sequence is Pantothenate kinase (309 aa).

ATP is bound at residue 92–99 (GSVAVGKT).

Belongs to the prokaryotic pantothenate kinase family.

The protein resides in the cytoplasm. The catalysed reaction is (R)-pantothenate + ATP = (R)-4'-phosphopantothenate + ADP + H(+). It functions in the pathway cofactor biosynthesis; coenzyme A biosynthesis; CoA from (R)-pantothenate: step 1/5. The polypeptide is Pantothenate kinase (coaA) (Lactiplantibacillus plantarum (strain ATCC BAA-793 / NCIMB 8826 / WCFS1) (Lactobacillus plantarum)).